The sequence spans 904 residues: Pentatricopeptide repeat-containing protein At4g30825, chloroplastic (904 aa).

The transit peptide at Met-1 to Arg-61 directs the protein to the chloroplast. The interval Asn-75–Gln-94 is disordered. PPR repeat units follow at residues Asn-173–Phe-203, Ser-209–Pro-243, Asn-244–Phe-274, Cys-278–Leu-312, Lys-313–Pro-347, Asn-348–Pro-382, Asp-383–Pro-417, Asn-418–Tyr-452, Asn-487–Phe-521, Glu-522–Asp-553, Asn-557–Leu-591, Asp-592–Gln-622, Asp-628–Trp-662, Asn-663–Pro-697, Asn-698–Asp-732, Val-733–Val-766, Ser-767–Pro-801, Asp-802–Pro-836, Asp-837–Pro-871, and Asp-872–Ile-904.

The protein belongs to the PPR family. P subfamily.

It localises to the plastid. Its subcellular location is the chloroplast. The protein is Pentatricopeptide repeat-containing protein At4g30825, chloroplastic of Arabidopsis thaliana (Mouse-ear cress).